The sequence spans 252 residues: L-aspartate dehydrogenase (252 aa).

NAD(+)-binding residues include Ala119 and Asn175. His203 is a catalytic residue.

Belongs to the L-aspartate dehydrogenase family.

It catalyses the reaction L-aspartate + NADP(+) + H2O = oxaloacetate + NH4(+) + NADPH + H(+). The enzyme catalyses L-aspartate + NAD(+) + H2O = oxaloacetate + NH4(+) + NADH + H(+). It participates in cofactor biosynthesis; NAD(+) biosynthesis; iminoaspartate from L-aspartate (dehydrogenase route): step 1/1. Specifically catalyzes the NAD or NADP-dependent dehydrogenation of L-aspartate to iminoaspartate. The polypeptide is L-aspartate dehydrogenase (Methanospirillum hungatei JF-1 (strain ATCC 27890 / DSM 864 / NBRC 100397 / JF-1)).